Reading from the N-terminus, the 377-residue chain is D-alanine--D-alanine ligase (377 aa).

One can recognise an ATP-grasp domain in the interval 140 to 349 (KELLTVNNIR…NVELVDKLID (210 aa)). Position 170–225 (170–225 (VKDLGDVVFVKAANQGSSVGVSRAKTADEFEAALTDSFQYDYKVLIEAAVKGPREL)) interacts with ATP. Residues Asp303, Glu316, and Asn318 each contribute to the Mg(2+) site.

Belongs to the D-alanine--D-alanine ligase family. Mg(2+) serves as cofactor. Mn(2+) is required as a cofactor.

It localises to the cytoplasm. The enzyme catalyses 2 D-alanine + ATP = D-alanyl-D-alanine + ADP + phosphate + H(+). Its pathway is cell wall biogenesis; peptidoglycan biosynthesis. In terms of biological role, cell wall formation. This is D-alanine--D-alanine ligase from Leuconostoc citreum (strain KM20).